The following is a 254-amino-acid chain: Very-long-chain (3R)-3-hydroxyacyl-CoA dehydratase 2 (254 aa).

The span at 1 to 10 (MAAAAATAAT) shows a compositional bias: low complexity. The segment at 1–34 (MAAAAATAATKGNGGGSGRVGAGDSSGARKKKGP) is disordered. Ala2 is subject to N-acetylalanine. Topologically, residues 2-41 (AAAAATAATKGNGGGSGRVGAGDSSGARKKKGPGPVATAY) are cytoplasmic. A compositionally biased stretch (gly residues) spans 12-21 (GNGGGSGRVG). The helical transmembrane segment at 42–60 (LVIYNVVMTAGWLVIAVGL) threads the bilayer. The Lumenal portion of the chain corresponds to 61-79 (VRAYLAKGSYHSLYYSIER). Residues 80–97 (PLKFFQTGALLEILHCAI) traverse the membrane as a helical segment. Residues 98–107 (GIVPSSVVLT) are Cytoplasmic-facing. Residues 108–125 (SFQVMSRVFLIWAVTHSV) form a helical membrane-spanning segment. At 126 to 130 (KEVQS) the chain is on the lumenal side. A helical transmembrane segment spans residues 131–146 (EDSVLLFVIAWTITEI). The Cytoplasmic segment spans residues 147–169 (IRYSFYTFSLLNHLPYIIKWARY). A helical membrane pass occupies residues 170-187 (TLFIVLYPMGVTGELLTI). Catalysis depends on residues Tyr176 and Glu183. Residues 188–217 (YAALPFVRQAGLYSISLPNKYNFSFDYHAF) are Lumenal-facing. Residues 198-214 (GLYSISLPNKYNFSFDY) form a may be involved in interaction with TECR region. Asn209 is a glycosylation site (N-linked (GlcNAc...) asparagine). A helical transmembrane segment spans residues 218–235 (LILIMISYIPLFPQLYFH). Residues 236-254 (MIHQRRKVLSHTEEHKKFE) lie on the Cytoplasmic side of the membrane.

The protein belongs to the very long-chain fatty acids dehydratase HACD family. As to quaternary structure, may interact with enzymes of the ELO family (including ELOVL1); with those enzymes that mediate condensation, the first of the four steps of the reaction cycle responsible for fatty acids elongation, may be part of a larger fatty acids elongase complex. Interacts with BCAP31. Interacts with TECR.

It localises to the endoplasmic reticulum membrane. The catalysed reaction is a very-long-chain (3R)-3-hydroxyacyl-CoA = a very-long-chain (2E)-enoyl-CoA + H2O. The enzyme catalyses (3R)-hydroxyhexadecanoyl-CoA = (2E)-hexadecenoyl-CoA + H2O. It catalyses the reaction (3R)-hydroxyoctadecanoyl-CoA = (2E)-octadecenoyl-CoA + H2O. It carries out the reaction (3R)-hydroxyeicosanoyl-CoA = (2E)-eicosenoyl-CoA + H2O. The catalysed reaction is (3R)-hydroxydocosanoyl-CoA = (2E)-docosenoyl-CoA + H2O. The enzyme catalyses (3R)-hydroxytetracosanoyl-CoA = (2E)-tetracosenoyl-CoA + H2O. It catalyses the reaction (3R)-hydroxyhexacosanoyl-CoA = (2E)-hexacosenoyl-CoA + H2O. It participates in lipid metabolism; fatty acid biosynthesis. In terms of biological role, catalyzes the third of the very long-chain fatty acids (VLCFA) elongation four-step cycle (condensation, reduction, dehydration, and reduction). This endoplasmic reticulum-elongation process is characterized by the addition of two carbons to the lipid chain through each cycle. This enzyme catalyzes the dehydration of the 3-hydroxyacyl-CoA intermediate into trans-2,3-enoyl-CoA, within each cycle of elongation. Therefore, it participates in the production of various VLCFAs involved in multiple biological processes as precursors of membrane lipids and lipid mediators. This Mus musculus (Mouse) protein is Very-long-chain (3R)-3-hydroxyacyl-CoA dehydratase 2.